Consider the following 177-residue polypeptide: Calerythrin (177 aa).

4 consecutive EF-hand domains span residues Ile5 to Ala40, Ala45 to Phe90, Val100 to Met134, and Met134 to Gly169. Residues Asp18, Asp20, Asn22, and Asp29 each coordinate Ca(2+). Ca(2+) contacts are provided by Asp113, Asn115, Asp117, Gln119, Glu124, Asp147, Asn149, Asn151, Glu153, and Glu158.

This is Calerythrin from Saccharopolyspora erythraea (Streptomyces erythraeus).